Consider the following 442-residue polypeptide: MRVSRYFLPILKETPREAEIVSHRLMLRSGMIRQQGAGSFSWLPLGKRVLDKVCQIVREEQDRAGAQEILMPTIQSADLWIESGRYNDYGKEMLRIRDRQDRAMLYGPTNEEMVTDIFRAYVKSYKDLPLNLYHIQWKFRDEVRPRFGVMRSREFLMKDAYSFDLDYEGAKAAYNRMFVAYLRTFARMGLKAIPMRADTGPIGGDLSHEFIILASTGESEVFCNKDFLDLPVPPADVDFTNDAEIGGVVSEWTTPYAATDEMHDEAAWAEVPAEKQLAARGIEVGHIFHFGTKYSKPMNAKVTGPDGQEHFVSMGSYGIGPTRLTAAIIEASHDDGGIIWPESVAPFDVALINMKVGDAECDRVCEELYAGMTAAGREVLYDDTDQRAGAKFATADLIGLPWQVIVGPRGIAAGEVEVKNRATGERENLPISAVPGRFGARR.

This sequence belongs to the class-II aminoacyl-tRNA synthetase family. ProS type 2 subfamily. Homodimer.

It is found in the cytoplasm. The catalysed reaction is tRNA(Pro) + L-proline + ATP = L-prolyl-tRNA(Pro) + AMP + diphosphate. Its function is as follows. Catalyzes the attachment of proline to tRNA(Pro) in a two-step reaction: proline is first activated by ATP to form Pro-AMP and then transferred to the acceptor end of tRNA(Pro). The protein is Proline--tRNA ligase of Chelativorans sp. (strain BNC1).